The following is a 191-amino-acid chain: Hypoxanthine/guanine phosphoribosyltransferase (191 aa).

Belongs to the purine/pyrimidine phosphoribosyltransferase family. Archaeal HPRT subfamily. Homodimer.

It is found in the cytoplasm. It catalyses the reaction IMP + diphosphate = hypoxanthine + 5-phospho-alpha-D-ribose 1-diphosphate. It carries out the reaction GMP + diphosphate = guanine + 5-phospho-alpha-D-ribose 1-diphosphate. The protein operates within purine metabolism; IMP biosynthesis via salvage pathway; IMP from hypoxanthine: step 1/1. In terms of biological role, catalyzes a salvage reaction resulting in the formation of IMP that is energically less costly than de novo synthesis. This chain is Hypoxanthine/guanine phosphoribosyltransferase, found in Methanocella arvoryzae (strain DSM 22066 / NBRC 105507 / MRE50).